A 103-amino-acid chain; its full sequence is Small ribosomal subunit protein uS10 (103 aa).

The protein belongs to the universal ribosomal protein uS10 family. As to quaternary structure, part of the 30S ribosomal subunit.

Functionally, involved in the binding of tRNA to the ribosomes. This is Small ribosomal subunit protein uS10 from Azotobacter vinelandii (strain DJ / ATCC BAA-1303).